A 400-amino-acid polypeptide reads, in one-letter code: E3 ubiquitin-protein ligase RNF149 (400 aa).

The first 32 residues, 1–32 (MAWRRREASVGARGVLALALLALALCVPGARG), serve as a signal peptide directing secretion. N-linked (GlcNAc...) asparagine glycosylation is found at N52 and N145. The 109-residue stretch at 67–175 (SSPKEGAHGL…PKGREILELV (109 aa)) folds into the PA domain. The chain crosses the membrane as a helical span at residues 201–221 (VVFVAIAFITMMIISLAWLIF). Residues 269–310 (CAVCIENFKVKDIIRILPCKHIFHRICIDPWLLDHRTCPMCK) form an RING-type; atypical zinc finger. The tract at residues 325–400 (DVQEMPAPES…SDSRHGGPIS (76 aa)) is disordered. Phosphoserine is present on S345. Residues 356–368 (DSSPPSASPAESE) show a composition bias toward low complexity. Residues 389–400 (GRSDSRHGGPIS) show a composition bias toward basic and acidic residues.

The protein localises to the membrane. The catalysed reaction is S-ubiquitinyl-[E2 ubiquitin-conjugating enzyme]-L-cysteine + [acceptor protein]-L-lysine = [E2 ubiquitin-conjugating enzyme]-L-cysteine + N(6)-ubiquitinyl-[acceptor protein]-L-lysine.. It participates in protein modification; protein ubiquitination. Functionally, E3 ubiquitin-protein ligase. Ubiquitinates BRAF, inducing its proteasomal degradation. The polypeptide is E3 ubiquitin-protein ligase RNF149 (RNF149) (Homo sapiens (Human)).